The following is a 160-amino-acid chain: Cytochrome b6-f complex subunit 4 (160 aa).

4 helical membrane passes run 36–56 (LLYI…GLAV), 68–88 (PFAT…FQIL), 95–115 (FFGV…PFLE), and 131–151 (SVFL…VLPI).

The protein belongs to the cytochrome b family. PetD subfamily. In terms of assembly, the 4 large subunits of the cytochrome b6-f complex are cytochrome b6, subunit IV (17 kDa polypeptide, petD), cytochrome f and the Rieske protein, while the 4 small subunits are petG, petL, petM and petN. The complex functions as a dimer.

The protein resides in the plastid. The protein localises to the chloroplast thylakoid membrane. Functionally, component of the cytochrome b6-f complex, which mediates electron transfer between photosystem II (PSII) and photosystem I (PSI), cyclic electron flow around PSI, and state transitions. This Welwitschia mirabilis (Tree tumbo) protein is Cytochrome b6-f complex subunit 4.